A 198-amino-acid polypeptide reads, in one-letter code: tRNA (pseudouridine(54)-N(1))-methyltransferase (198 aa).

S-adenosyl-L-methionine-binding residues include Leu134 and Gly155.

The protein belongs to the methyltransferase superfamily. TrmY family. In terms of assembly, homodimer.

The protein resides in the cytoplasm. It catalyses the reaction pseudouridine(54) in tRNA + S-adenosyl-L-methionine = N(1)-methylpseudouridine(54) in tRNA + S-adenosyl-L-homocysteine + H(+). Its function is as follows. Specifically catalyzes the N1-methylation of pseudouridine at position 54 (Psi54) in tRNAs. In Thermococcus kodakarensis (strain ATCC BAA-918 / JCM 12380 / KOD1) (Pyrococcus kodakaraensis (strain KOD1)), this protein is tRNA (pseudouridine(54)-N(1))-methyltransferase.